Consider the following 1377-residue polypeptide: DNA-directed RNA polymerase subunit beta' (1377 aa).

Residues Cys60, Cys62, Cys75, and Cys78 each contribute to the Zn(2+) site. Positions 449, 451, and 453 each coordinate Mg(2+). Zn(2+)-binding residues include Cys777, Cys851, Cys858, and Cys861.

This sequence belongs to the RNA polymerase beta' chain family. In terms of assembly, the RNAP catalytic core consists of 2 alpha, 1 beta, 1 beta' and 1 omega subunit. When a sigma factor is associated with the core the holoenzyme is formed, which can initiate transcription. It depends on Mg(2+) as a cofactor. Requires Zn(2+) as cofactor.

The enzyme catalyses RNA(n) + a ribonucleoside 5'-triphosphate = RNA(n+1) + diphosphate. Functionally, DNA-dependent RNA polymerase catalyzes the transcription of DNA into RNA using the four ribonucleoside triphosphates as substrates. The chain is DNA-directed RNA polymerase subunit beta' from Borreliella afzelii (strain PKo) (Borrelia afzelii).